Here is a 142-residue protein sequence, read N- to C-terminus: ATP synthase epsilon chain (142 aa).

Belongs to the ATPase epsilon chain family. As to quaternary structure, F-type ATPases have 2 components, CF(1) - the catalytic core - and CF(0) - the membrane proton channel. CF(1) has five subunits: alpha(3), beta(3), gamma(1), delta(1), epsilon(1). CF(0) has three main subunits: a, b and c.

Its subcellular location is the cell inner membrane. In terms of biological role, produces ATP from ADP in the presence of a proton gradient across the membrane. The chain is ATP synthase epsilon chain from Histophilus somni (strain 2336) (Haemophilus somnus).